Consider the following 185-residue polypeptide: Elongation factor P (185 aa).

Belongs to the elongation factor P family.

The protein resides in the cytoplasm. Its pathway is protein biosynthesis; polypeptide chain elongation. Its function is as follows. Involved in peptide bond synthesis. Stimulates efficient translation and peptide-bond synthesis on native or reconstituted 70S ribosomes in vitro. Probably functions indirectly by altering the affinity of the ribosome for aminoacyl-tRNA, thus increasing their reactivity as acceptors for peptidyl transferase. The sequence is that of Elongation factor P from Paraburkholderia phytofirmans (strain DSM 17436 / LMG 22146 / PsJN) (Burkholderia phytofirmans).